We begin with the raw amino-acid sequence, 382 residues long: uncharacterized protein (382 aa).

12 helical membrane-spanning segments follow: residues 14 to 34 (GLLL…LWLA), 45 to 65 (VVSS…GYVI), 79 to 99 (FIFA…SWLA), 102 to 122 (FVAG…LMCS), 131 to 151 (LLAA…LLVS), 157 to 177 (LMSV…PLLF), 204 to 224 (LGVN…GLMP), 235 to 255 (ASIG…QWPI), 270 to 290 (VQVF…AMAP), 291 to 311 (ALFI…AWAC), 325 to 345 (ALLL…AMLM), and 348 to 368 (FSDN…LLML).

The protein belongs to the major facilitator superfamily. YcaD (TC 2.A.1.26) family.

It localises to the cell inner membrane. This is an uncharacterized protein from Shigella flexneri serotype 5b (strain 8401).